Reading from the N-terminus, the 109-residue chain is MDAQGDAGAQGGSQGGPRPSNKRLQQTQAQVDEVVGIMKVNVEKVLERDQKLSQLDDRADALQEGASQFEKSAATLKRKYWWKNIKMMIIMCAIVVILIIIIVLWAGGK.

The disordered stretch occupies residues 1-26; that stretch reads MDAQGDAGAQGGSQGGPRPSNKRLQQ. The Cytoplasmic portion of the chain corresponds to 1–86; sequence MDAQGDAGAQ…KRKYWWKNIK (86 aa). The v-SNARE coiled-coil homology domain maps to 23 to 83; the sequence is RLQQTQAQVD…ATLKRKYWWK (61 aa). The chain crosses the membrane as a helical; Anchor for type IV membrane protein span at residues 87–107; the sequence is MMIIMCAIVVILIIIIVLWAG. Residues 108-109 are Extracellular-facing; the sequence is GK.

Belongs to the synaptobrevin family. Part of the SNARE core complex containing ric-4/SNAP25, snb-1/VAMP2 and unc-64/STX1A. This complex binds to cpx-1/CPLX1. Expressed in the nervous system notably the nerve ring, ventral cord and dorsal cord.

It localises to the cytoplasmic vesicle. Its subcellular location is the secretory vesicle. It is found in the synaptic vesicle membrane. The protein localises to the cell membrane. The protein resides in the synapse. It localises to the synaptosome. In terms of biological role, involved in the targeting and/or fusion of transport vesicles to their target membrane. Acts in neuronal exocytosis of synaptic transmission. Likely to have a role in cholinergic transmisson. Required for viability, coordinated movement and M3 pharynx motor neuron function. This chain is Synaptobrevin-1, found in Caenorhabditis elegans.